Reading from the N-terminus, the 935-residue chain is Progesterone receptor (935 aa).

The interval 1-49 is disordered; the sequence is MTELKAKGXRAPHVAGSPSSPKVXSPLPCRQAAXPFPGSQTSDTLPEVS. Residues 1–164 form an AF3; mediates transcriptional activation region; that stretch reads MTELKAKGXR…SATQRVLSRL (164 aa). The tract at residues 1-568 is modulating, Pro-Rich; it reads MTELKAKGXR…YSFESLPQKI (568 aa). The segment covering 17–28 has biased composition (low complexity); it reads SPSSPKVXSPLP. Residue Ser-20 is modified to Phosphoserine. The short motif at 55-59 is the LXXL motif 1 element; the sequence is LDGLL. Residues 61-255 form a disordered region; that stretch reads PRICQGQDPP…GAAAGGGAAA (195 aa). A Phosphoserine modification is found at Ser-81. The LXXL motif 2 motif lies at 115 to 119; it reads LDTLW. Phosphoserine occurs at positions 130 and 162. A mediates transcriptional transrepression region spans residues 165-305; sequence MSRSGGKAGD…LATTVTDFIH (141 aa). The Nuclear localization signal motif lies at 183–187; the sequence is KVLPR. Ser-190 bears the Phosphoserine mark. The span at 191-203 shows a compositional bias: polar residues; the sequence is PSRQLLLPTTGSP. At Ser-213 the chain carries Phosphoserine. Residues 220–231 are compositionally biased toward acidic residues; that stretch reads EVEEEDGSESED. Low complexity predominate over residues 232–246; that stretch reads SAGPLLKGKPRALGG. A Phosphoserine; by MAPK1 modification is found at Ser-294. A disordered region spans residues 331 to 365; it reads GGAGAASAFAPPRSSPSASSTPVPGGDFPDCAYAP. Low complexity predominate over residues 335–356; sequence AASAFAPPRSSPSASSTPVPGG. Residue Ser-345 is modified to Phosphoserine; by MAPK. Lys-388 participates in a covalent cross-link: Glycyl lysine isopeptide (Lys-Gly) (interchain with G-Cter in SUMO); alternate. Lys-388 is covalently cross-linked (Glycyl lysine isopeptide (Lys-Gly) (interchain with G-Cter in ubiquitin); alternate). The residue at position 400 (Ser-400) is a Phosphoserine; by CDK2. Residues 415–452 form a disordered region; sequence PDFPLGPPPPLPPRAPPSRPGEAAVTAAPASASVSSAS. The segment covering 418–433 has biased composition (pro residues); it reads PLGPPPPLPPRAPPSR. A compositionally biased stretch (low complexity) spans 434–452; it reads PGEAAVTAAPASASVSSAS. Positions 456–548 are AF1; mediates transcriptional activation; sequence STLECILYKA…VYPPYLNYLR (93 aa). Lys-533 is covalently cross-linked (Glycyl lysine isopeptide (Lys-Gly) (interchain with G-Cter in SUMO)). NR C4-type zinc fingers lie at residues 569-589 and 605-629; these read CLIC…CGSC and CAGR…LRKC. The segment at residues 569-641 is a DNA-binding region (nuclear receptor); the sequence is CLICGDEASG…AGMVLGGRKF (73 aa). Ser-678 carries the phosphoserine modification. The 235-residue stretch at 681–915 folds into the NR LBD domain; the sequence is QDIQLIPPLI…EFPEMMSEVI (235 aa). An AF2; mediates transcriptional activation region spans residues 689–935; it reads LINLLLSIEP…MVKPLLFHKK (247 aa).

This sequence belongs to the nuclear hormone receptor family. As to quaternary structure, interacts with SMARD1 and UNC45A. Interacts with CUEDC2; the interaction promotes ubiquitination, decreases sumoylation, and represses transcriptional activity. Interacts with PIAS3; the interaction promotes sumoylation of PR in a hormone-dependent manner, inhibits DNA-binding, and alters nuclear export. Interacts with SP1; the interaction requires ligand-induced phosphorylation on Ser-345 by ERK1/2-MAPK. Interacts with PRMT2. Interacts with NCOA2 and NCOA1. Interacts with KLF9. Interacts with GTF2B. Post-translationally, phosphorylated on multiple serine sites. Several of these sites are hormone-dependent. Phosphorylation on Ser-294 is highly hormone-dependent and modulates ubiquitination and sumoylation on Lys-388. Phosphorylation on Ser-345 also requires induction by hormone. Basal phosphorylation on Ser-81, Ser-162, Ser-190 and Ser-400 is increased in response to progesterone and can be phosphorylated in vitro by the CDK2-A1 complex. Increased levels of phosphorylation on Ser-400 also in the presence of EGF, heregulin, IGF, PMA and FBS. Phosphorylation at this site by CDK2 is ligand-independent, and increases nuclear translocation and transcriptional activity. Phosphorylation at Ser-162 and Ser-294, but not at Ser-190, is impaired during the G(2)/M phase of the cell cycle. Phosphorylation on Ser-345 by ERK1/2 MAPK is required for interaction with SP1. In terms of processing, sumoylation is hormone-dependent and represses transcriptional activity. Sumoylation on all three sites is enhanced by PIAS3. Desumoylated by SENP1. Sumoylation on Lys-388, the main site of sumoylation, is repressed by ubiquitination on the same site, and modulated by phosphorylation at Ser-294. Ubiquitination is hormone-dependent and represses sumoylation on the same site. Promoted by MAPK-mediated phosphorylation on Ser-294. Post-translationally, palmitoylated by ZDHHC7 and ZDHHC21. Palmitoylation is required for plasma membrane targeting and for rapid intracellular signaling via ERK and AKT kinases and cAMP generation.

The protein resides in the nucleus. It is found in the cytoplasm. Functionally, the steroid hormones and their receptors are involved in the regulation of eukaryotic gene expression and affect cellular proliferation and differentiation in target tissues. Transcriptional activator of several progesteron-dependent promoters in a variety of cell types. Involved in activation of SRC-dependent MAPK signaling on hormone stimulation. In Ateles paniscus (Black spider monkey), this protein is Progesterone receptor (PGR).